Consider the following 617-residue polypeptide: Chaperone protein DnaK (617 aa).

Thr-174 is modified (phosphothreonine; by autocatalysis). Over residues 575-592 (AQAQQQAQQQAQGQQGAQ) the composition is skewed to low complexity. The interval 575 to 617 (AQAQQQAQQQAQGQQGAQTDNQTGQNDGKTIDVDYEEVDDDDK) is disordered. A compositionally biased stretch (polar residues) spans 593 to 602 (TDNQTGQNDG). Acidic residues predominate over residues 607–617 (VDYEEVDDDDK).

This sequence belongs to the heat shock protein 70 family.

In terms of biological role, acts as a chaperone. The chain is Chaperone protein DnaK from Halothermothrix orenii (strain H 168 / OCM 544 / DSM 9562).